A 131-amino-acid chain; its full sequence is Profilin LP04 (131 aa).

Belongs to the profilin family. As to quaternary structure, occurs in many kinds of cells as a complex with monomeric actin in a 1:1 ratio.

It localises to the cytoplasm. The protein resides in the cytoskeleton. Functionally, binds to actin and affects the structure of the cytoskeleton. At high concentrations, profilin prevents the polymerization of actin, whereas it enhances it at low concentrations. By binding to PIP2, it inhibits the formation of IP3 and DG. The protein is Profilin LP04 of Oryza sativa subsp. indica (Rice).